The primary structure comprises 118 residues: Ribosome-binding factor A (118 aa).

It belongs to the RbfA family. As to quaternary structure, monomer. Binds 30S ribosomal subunits, but not 50S ribosomal subunits or 70S ribosomes.

It is found in the cytoplasm. One of several proteins that assist in the late maturation steps of the functional core of the 30S ribosomal subunit. Associates with free 30S ribosomal subunits (but not with 30S subunits that are part of 70S ribosomes or polysomes). Required for efficient processing of 16S rRNA. May interact with the 5'-terminal helix region of 16S rRNA. The chain is Ribosome-binding factor A from Geobacter sulfurreducens (strain ATCC 51573 / DSM 12127 / PCA).